The chain runs to 547 residues: Chaperonin GroEL (547 aa).

ATP contacts are provided by residues 30 to 33, Lys51, 87 to 91, Gly415, and Asp496; these read TLGP and DGTTT. Positions 527-547 are disordered; sequence ENTPDMPAMPPGGMGGMGGMY. Residues 538–547 show a composition bias toward gly residues; the sequence is GGMGGMGGMY.

This sequence belongs to the chaperonin (HSP60) family. Forms a cylinder of 14 subunits composed of two heptameric rings stacked back-to-back. Interacts with the co-chaperonin GroES.

Its subcellular location is the cytoplasm. The catalysed reaction is ATP + H2O + a folded polypeptide = ADP + phosphate + an unfolded polypeptide.. Together with its co-chaperonin GroES, plays an essential role in assisting protein folding. The GroEL-GroES system forms a nano-cage that allows encapsulation of the non-native substrate proteins and provides a physical environment optimized to promote and accelerate protein folding. This is Chaperonin GroEL from Chlorobium phaeovibrioides (strain DSM 265 / 1930) (Prosthecochloris vibrioformis (strain DSM 265)).